Here is a 554-residue protein sequence, read N- to C-terminus: Probable urocanate hydratase (554 aa).

NAD(+) contacts are provided by residues 49–50, Q127, E194, 240–241, 261–265, 271–272, and Y320; these read GG, NA, QTAAH, and YI. C408 is a catalytic residue. G490 provides a ligand contact to NAD(+).

It belongs to the urocanase family. It depends on NAD(+) as a cofactor.

The protein resides in the cytoplasm. The catalysed reaction is 4-imidazolone-5-propanoate = trans-urocanate + H2O. It functions in the pathway amino-acid degradation; L-histidine degradation into L-glutamate; N-formimidoyl-L-glutamate from L-histidine: step 2/3. In terms of biological role, catalyzes the conversion of urocanate to 4-imidazolone-5-propionate. The chain is Probable urocanate hydratase from Thermoplasma acidophilum (strain ATCC 25905 / DSM 1728 / JCM 9062 / NBRC 15155 / AMRC-C165).